A 370-amino-acid polypeptide reads, in one-letter code: Coproporphyrin III ferrochelatase (370 aa).

Fe-coproporphyrin III-binding residues include serine 58 and tyrosine 127. Residues histidine 189 and glutamate 276 each coordinate Fe(2+).

Belongs to the ferrochelatase family.

The protein localises to the cytoplasm. It carries out the reaction Fe-coproporphyrin III + 2 H(+) = coproporphyrin III + Fe(2+). It participates in porphyrin-containing compound metabolism; protoheme biosynthesis. In terms of biological role, involved in coproporphyrin-dependent heme b biosynthesis. Catalyzes the insertion of ferrous iron into coproporphyrin III to form Fe-coproporphyrin III. The sequence is that of Coproporphyrin III ferrochelatase from Corynebacterium glutamicum (strain R).